The sequence spans 47 residues: uncharacterized protein (47 aa).

Residues 24-47 form a disordered region; the sequence is FGPNPIEPPTDIAPDPDSTKTWLI.

This is an uncharacterized protein from Mycobacterium tuberculosis (strain ATCC 25618 / H37Rv).